Reading from the N-terminus, the 337-residue chain is Glutathione transferase 3 (337 aa).

At 1–239 (MPTKSTFSRW…NKYQYTLDFC (239 aa)) the chain is on the cytoplasmic side. Phosphoserine is present on residues Ser-66, Ser-72, Ser-99, and Ser-116. The disordered stretch occupies residues 66 to 95 (SMTVDQSKDERNEYGSGSGNGSGSGSCDTA). Residues 107 to 132 (KEDDDEKPQSGDETSATKPLSSRNAN) form a disordered region. Residues 117–132 (GDETSATKPLSSRNAN) show a composition bias toward polar residues. A helical transmembrane segment spans residues 240-260 (LPILTWLLFFRGIPTLVSYYI). The Perinuclear space segment spans residues 261–313 (NFIRYDLNIELDPMTFNLTKFLISLAIFKTCNNKNIDFHSFRCVNQLWTQLCT). A helical membrane pass occupies residues 314–336 (VNRSLGMVPLVFSMVSCLLTLYV). Position 337 (Leu-337) is a topological domain, cytoplasmic.

Its subcellular location is the nucleus membrane. This is Glutathione transferase 3 (GTT3) from Saccharomyces cerevisiae (strain ATCC 204508 / S288c) (Baker's yeast).